The following is a 505-amino-acid chain: MGAKIQADEISSIIKERIDNFELNVDVNETGKIISYADGIAQVYGLKNVMAGEIVEFENGEKGLASNLEESSVGVVILGKGEGLREGTSCKRVGKLLETPVGEALVGRVVNALGEPIDGKGAIAATETRFVEEKAPGIMARKSVHEPLQTGIKAIDALVPIGRGQRELIIGDRQTGKTTVAIDTILNQKGENVICIYVAIGQKSSSIASVVRTLEESGAMDYTIVVNASAADSSALQFLAPYTGVTIGEYFRDNGKHALIIYDDLSKHAVAYREMSLILRRPPGREAYPGDVFYLHSRLLERAAKMSDERGAGSMTALPIIETQAGDVAAYIPTNVISITDGQIFLETNLFNSGIRPAINVGLSVSRVGGAAQIKATKQVAGTLKLSLAQYRELEAFAQFASDLDEATRRELELGQRMVEVLKQGVNKPLVIEKQIVIIYAGTKGYLNDIAVKDVVRFEAELHAFFEQKYSNILEAIKASQKIDDNTETQLKAALEEFKTVFNAN.

171–178 (GDRQTGKT) contacts ATP.

The protein belongs to the ATPase alpha/beta chains family. In terms of assembly, F-type ATPases have 2 components, CF(1) - the catalytic core - and CF(0) - the membrane proton channel. CF(1) has five subunits: alpha(3), beta(3), gamma(1), delta(1), epsilon(1). CF(0) has three main subunits: a(1), b(2) and c(9-12). The alpha and beta chains form an alternating ring which encloses part of the gamma chain. CF(1) is attached to CF(0) by a central stalk formed by the gamma and epsilon chains, while a peripheral stalk is formed by the delta and b chains.

It localises to the cell inner membrane. The catalysed reaction is ATP + H2O + 4 H(+)(in) = ADP + phosphate + 5 H(+)(out). Its function is as follows. Produces ATP from ADP in the presence of a proton gradient across the membrane. The alpha chain is a regulatory subunit. The protein is ATP synthase subunit alpha of Aliarcobacter butzleri (strain RM4018) (Arcobacter butzleri).